We begin with the raw amino-acid sequence, 435 residues long: Putative pyridoxal-phosphate dependent protein F13B12.4 (435 aa).

A signal peptide spans 1-18; that stretch reads MKLLLLALFLSISASCLA. Asn79 carries N-linked (GlcNAc...) asparagine glycosylation. Position 89 is an N6-(pyridoxal phosphate)lysine (Lys89). Position 235–239 (235–239) interacts with pyridoxal 5'-phosphate; it reads GTGGT. Residue Asn277 is glycosylated (N-linked (GlcNAc...) asparagine). Ser342 is a pyridoxal 5'-phosphate binding site.

It belongs to the cysteine synthase/cystathionine beta-synthase family. Highly divergent.

This is Putative pyridoxal-phosphate dependent protein F13B12.4 from Caenorhabditis elegans.